Here is a 1225-residue protein sequence, read N- to C-terminus: ABC transporter B family member 18 (1225 aa).

6 helical membrane passes run 23–43, 70–90, 146–168, 172–194, 252–272, and 284–304; these read MALG…IFFI, VALV…GYCW, LPNF…LLLW, IVGF…ALIR, GIAI…TWYG, and GTVS…GQSL. One can recognise an ABC transmembrane type-1 1 domain in the interval 23–312; that stretch reads MALGLIGAVG…SLSNLKYFSE (290 aa). Residues 347 to 583 enclose the ABC transporter 1 domain; it reads VEFNHVKFTY…LDGQYTSLVR (237 aa). 382 to 389 is an ATP binding site; that stretch reads GGSGSGKS. Asn530 is a glycosylation site (N-linked (GlcNAc...) asparagine). Transmembrane regions (helical) follow at residues 657 to 677 and 699 to 719; these read ALYG…YSYS and IYVL…ISQH. Positions 657–945 constitute an ABC transmembrane type-1 2 domain; the sequence is ALYGCLGAAL…AGTMTKDLVK (289 aa). Asn754 is a glycosylation site (N-linked (GlcNAc...) asparagine). Helical transmembrane passes span 780–800, 804–824, 880–900, and 919–939; these read LLVQ…VISW, IVMM…RVLL, SWLA…VSAL, and FLEI…AGTM. 2 N-linked (GlcNAc...) asparagine glycosylation sites follow: Asn960 and Asn1000. The 239-residue stretch at 980 to 1218 folds into the ABC transporter 2 domain; it reads ISFSNVDFAY…GPKGAYFSLV (239 aa). 1015 to 1022 provides a ligand contact to ATP; the sequence is GPSGSGKS. An N-linked (GlcNAc...) asparagine glycan is attached at Asn1201.

It belongs to the ABC transporter superfamily. ABCB family. Multidrug resistance exporter (TC 3.A.1.201) subfamily.

The protein resides in the membrane. The chain is ABC transporter B family member 18 (ABCB18) from Arabidopsis thaliana (Mouse-ear cress).